The chain runs to 208 residues: MELKVLNVQGQEVKTISLNDSVWNVAPHKQAIYDTVISQQAALRQGTKKTKTRAEVRGGGKKPWRQKGTGRARQGSIRAPHWRGGGVTFGPTPDINYKKSVNKKVRALAFKSALSIKASEQNLVIVDKFDFAKPSTKEMISVMKNLQIDDQKTLIITKENEELVIKSSSNIKGVKTLPSIKLNVFDILNATKLVMTEEAAMAVEGVYA.

A disordered region spans residues 44 to 85 (RQGTKKTKTRAEVRGGGKKPWRQKGTGRARQGSIRAPHWRGG). Over residues 59 to 70 (GGKKPWRQKGTG) the composition is skewed to basic residues.

This sequence belongs to the universal ribosomal protein uL4 family. Part of the 50S ribosomal subunit.

In terms of biological role, one of the primary rRNA binding proteins, this protein initially binds near the 5'-end of the 23S rRNA. It is important during the early stages of 50S assembly. It makes multiple contacts with different domains of the 23S rRNA in the assembled 50S subunit and ribosome. Forms part of the polypeptide exit tunnel. This Mesoplasma florum (strain ATCC 33453 / NBRC 100688 / NCTC 11704 / L1) (Acholeplasma florum) protein is Large ribosomal subunit protein uL4.